The primary structure comprises 194 residues: Protein GrpE (194 aa).

Basic and acidic residues predominate over residues 1–12 (MNKQKNNRERTP). Residues 1–44 (MNKQKNNRERTPQPEQDTERDEQLTNSHENDIDSAPAAEENDKV) form a disordered region.

It belongs to the GrpE family. Homodimer.

It localises to the cytoplasm. Functionally, participates actively in the response to hyperosmotic and heat shock by preventing the aggregation of stress-denatured proteins, in association with DnaK and GrpE. It is the nucleotide exchange factor for DnaK and may function as a thermosensor. Unfolded proteins bind initially to DnaJ; upon interaction with the DnaJ-bound protein, DnaK hydrolyzes its bound ATP, resulting in the formation of a stable complex. GrpE releases ADP from DnaK; ATP binding to DnaK triggers the release of the substrate protein, thus completing the reaction cycle. Several rounds of ATP-dependent interactions between DnaJ, DnaK and GrpE are required for fully efficient folding. This Porphyromonas gingivalis (strain ATCC BAA-308 / W83) protein is Protein GrpE.